The chain runs to 428 residues: Peptidase B (428 aa).

Residues Lys195 and Asp200 each coordinate Mn(2+). Residue Lys207 is part of the active site. The Mn(2+) site is built by Asp218, Asp277, and Glu279. Arg281 is an active-site residue.

It belongs to the peptidase M17 family. In terms of assembly, homohexamer. Requires Mn(2+) as cofactor.

The protein resides in the cytoplasm. It carries out the reaction Release of an N-terminal amino acid, Xaa, from a peptide or arylamide. Xaa is preferably Glu or Asp but may be other amino acids, including Leu, Met, His, Cys and Gln.. Its function is as follows. Probably plays an important role in intracellular peptide degradation. This is Peptidase B from Enterobacter sp. (strain 638).